A 387-amino-acid chain; its full sequence is Beta-alanyl-dopamine/carcinine hydrolase (387 aa).

This sequence belongs to the peptidase C45 family. In terms of assembly, the unprocessed protein forms homodimers. May form heterodimers composed of a 15 kDa alpha subunit and a 30 kDa beta subunit. In terms of processing, the protein is synthesized as a 43 kDa precursor which is then self-processed into a 15 kDa alpha subunit and a 30 kDa beta subunit. Processing appears to be necessary for beta-alanyl-dopamine/carcinine hydrolase activity. The beta subunit carries the beta-alanyl-dopamine/carcinine hydrolase activity. Expressed in body, head, optic lobes and retina (at protein level). Expressed in photoreceptor cells R1-R6 in the lamina and in photoreceptor cells R7 and R8 in the medulla (at protein level).

It is found in the cell projection. Its subcellular location is the axon. It localises to the cytoplasm. It carries out the reaction carcinine + H2O = histamine + beta-alanine. The catalysed reaction is beta-alanyl-dopamine + H2O = dopamine + beta-alanine. Functionally, in the cuticle, catalyzes the hydrolysis of beta-alanyl-dopamine releasing dopamine and beta-alanine; dopamine is a metabolite involved in the pigmentation and sclerotization of the insect cuticle. In the photoreceptor cells, catalyzes the hydrolysis of carcinine releasing histamine and beta-alanine contributing to the recycling of the neurotransmitter histamine in the optical nerve system. Also, regulates the cuticular hydrocarbon composition in females. This chain is Beta-alanyl-dopamine/carcinine hydrolase, found in Drosophila melanogaster (Fruit fly).